A 225-amino-acid polypeptide reads, in one-letter code: Sirohydrochlorin ferrochelatase, chloroplastic (225 aa).

A chloroplast-targeting transit peptide spans methionine 1–valine 46. The Fe cation site is built by histidine 89 and histidine 155. The [4Fe-4S] cluster site is built by cysteine 199, cysteine 210, cysteine 213, and cysteine 219.

It belongs to the CbiX family. SirB subfamily. Homodimer. The cofactor is [4Fe-4S] cluster.

Its subcellular location is the plastid. It localises to the chloroplast. The catalysed reaction is siroheme + 2 H(+) = sirohydrochlorin + Fe(2+). The protein operates within porphyrin-containing compound metabolism; siroheme biosynthesis; siroheme from sirohydrochlorin: step 1/1. In terms of biological role, chelates iron to the siroheme precursor. Catalyzes the last step of the siroheme biosynthesis. Unlike its counterparts in bacteria, contains an [Fe-S] cluster which is not involved directly in the enzymatic reaction, but may play regulatory role in iron, sulfur and tetrapyrrole metabolism. The [Fe-S] cluster is required for normal plant growth. This chain is Sirohydrochlorin ferrochelatase, chloroplastic, found in Arabidopsis thaliana (Mouse-ear cress).